The primary structure comprises 223 residues: Ribose-5-phosphate isomerase A (223 aa).

Substrate is bound by residues 32–35 (TGST), 85–88 (DGAD), and 98–101 (KGGG). The active-site Proton acceptor is the glutamate 107. Lysine 125 serves as a coordination point for substrate.

The protein belongs to the ribose 5-phosphate isomerase family. Homodimer.

It catalyses the reaction aldehydo-D-ribose 5-phosphate = D-ribulose 5-phosphate. Its pathway is carbohydrate degradation; pentose phosphate pathway; D-ribose 5-phosphate from D-ribulose 5-phosphate (non-oxidative stage): step 1/1. Functionally, catalyzes the reversible conversion of ribose-5-phosphate to ribulose 5-phosphate. This Marinomonas sp. (strain MWYL1) protein is Ribose-5-phosphate isomerase A.